A 422-amino-acid chain; its full sequence is UDP-N-acetylglucosamine 1-carboxyvinyltransferase (422 aa).

22-23 (KN) contacts phosphoenolpyruvate. Arg-93 is a binding site for UDP-N-acetyl-alpha-D-glucosamine. Residue Cys-117 is the Proton donor of the active site. 2-(S-cysteinyl)pyruvic acid O-phosphothioketal is present on Cys-117. UDP-N-acetyl-alpha-D-glucosamine contacts are provided by residues 122–126 (RPVDL), Asp-308, and Leu-330.

This sequence belongs to the EPSP synthase family. MurA subfamily.

It localises to the cytoplasm. The enzyme catalyses phosphoenolpyruvate + UDP-N-acetyl-alpha-D-glucosamine = UDP-N-acetyl-3-O-(1-carboxyvinyl)-alpha-D-glucosamine + phosphate. It participates in cell wall biogenesis; peptidoglycan biosynthesis. Its function is as follows. Cell wall formation. Adds enolpyruvyl to UDP-N-acetylglucosamine. The chain is UDP-N-acetylglucosamine 1-carboxyvinyltransferase from Helicobacter pylori (strain J99 / ATCC 700824) (Campylobacter pylori J99).